A 518-amino-acid chain; its full sequence is MIPDVSQALAWLEKHPQALKGIQRGLERETLRVNADGTLATTGHPEALGSALTHKWITTDFAEALLEFITPVDGDIEHMLTFMRDLHRYTARNMGDERMWPLSMPCYIAEGQDIELAQYGTSNTGRFKTLYREGLKNRYGALMQTISGVHYNFSLPMAFWQAKCGDISGADAKEKISAGYFRVIRNYYRFGWVIPYLFGASPAICSSFLQGKPTSLPFEKTECGMYYLPYATSLRLSDLGYTNKSQSNLGITFNDLYEYVAGLKQAIKTPSEEYAKIGIEKDGKRLQINSNVLQIENELYAPIRPKRVTRSGESPSDALLRGGIEYIEVRSLDINPFSPIGVDEQQVRFLDLFMVWCALADAPEMSSSELACTRVNWNRVILEGRKPGLTLGIGCETAQFPLPQVGKDLFRDLKRVAQTLDSINGGEAYQKVCDELVACFDNPDLTFSARILRSMIDTGIGGTGKAFAEAYRNLLREEPLEILREEDFVAEREASVRRQQEMEAADTEPFAVWLEKHA.

Belongs to the glutamate--cysteine ligase type 1 family. Type 1 subfamily.

The enzyme catalyses L-cysteine + L-glutamate + ATP = gamma-L-glutamyl-L-cysteine + ADP + phosphate + H(+). It participates in sulfur metabolism; glutathione biosynthesis; glutathione from L-cysteine and L-glutamate: step 1/2. This is Glutamate--cysteine ligase from Escherichia fergusonii (strain ATCC 35469 / DSM 13698 / CCUG 18766 / IAM 14443 / JCM 21226 / LMG 7866 / NBRC 102419 / NCTC 12128 / CDC 0568-73).